A 235-amino-acid chain; its full sequence is Phosphoribosylaminoimidazole-succinocarboxamide synthase (235 aa).

The protein belongs to the SAICAR synthetase family.

The enzyme catalyses 5-amino-1-(5-phospho-D-ribosyl)imidazole-4-carboxylate + L-aspartate + ATP = (2S)-2-[5-amino-1-(5-phospho-beta-D-ribosyl)imidazole-4-carboxamido]succinate + ADP + phosphate + 2 H(+). Its pathway is purine metabolism; IMP biosynthesis via de novo pathway; 5-amino-1-(5-phospho-D-ribosyl)imidazole-4-carboxamide from 5-amino-1-(5-phospho-D-ribosyl)imidazole-4-carboxylate: step 1/2. In Clostridium acetobutylicum (strain ATCC 824 / DSM 792 / JCM 1419 / IAM 19013 / LMG 5710 / NBRC 13948 / NRRL B-527 / VKM B-1787 / 2291 / W), this protein is Phosphoribosylaminoimidazole-succinocarboxamide synthase.